The primary structure comprises 696 residues: UvrABC system protein C (696 aa).

The GIY-YIG domain occupies 16–95 (TEPGVYKFRD…IKRFDPRFNV (80 aa)). In terms of domain architecture, UVR spans 208–243 (DKVTRKLNADMMAAAEELDFERAARLRDDLEAIDKV).

This sequence belongs to the UvrC family. In terms of assembly, interacts with UvrB in an incision complex.

It is found in the cytoplasm. The UvrABC repair system catalyzes the recognition and processing of DNA lesions. UvrC both incises the 5' and 3' sides of the lesion. The N-terminal half is responsible for the 3' incision and the C-terminal half is responsible for the 5' incision. This Corynebacterium glutamicum (strain ATCC 13032 / DSM 20300 / JCM 1318 / BCRC 11384 / CCUG 27702 / LMG 3730 / NBRC 12168 / NCIMB 10025 / NRRL B-2784 / 534) protein is UvrABC system protein C.